Reading from the N-terminus, the 217-residue chain is Magnetosome protein MamA (217 aa).

6 TPR repeats span residues 12-44 (VTLY…NDDI), 46-79 (QVYY…DAFD), 80-113 (VDVA…APDN), 114-147 (VKVA…NPIN), 148-181 (FNVR…RPNE), and 182-215 (GKVH…DEGA). The N-terminal domain (NTD) stretch occupies residues 41-112 (NDDIRQVYYR…LERSLADAPD (72 aa)). The interval 113–217 (NVKVATVLGL…ANELDEGASV (105 aa)) is C-terminal domain (CTD).

The protein belongs to the magnetosome MamA family. Oligomerizes into high molecular weight complexes (at least 560 kDa). Forms round, 20 nm diameter complexes with a central cavity. Interacts with full-length Mms6. Probably binds MamC.

The protein resides in the magnetosome membrane. Probably forms a large homooligomer on which other magnetosome subunits assemble. Required for formation of functional magnetosomes from pre-existing vesicles, it has a dynamic location in the cell. This is Magnetosome protein MamA from Paramagnetospirillum magneticum (strain ATCC 700264 / AMB-1) (Magnetospirillum magneticum).